The sequence spans 124 residues: Aspartate 1-decarboxylase (124 aa).

Residue Ser-25 is the Schiff-base intermediate with substrate; via pyruvic acid of the active site. Pyruvic acid (Ser) is present on Ser-25. Position 57 (Thr-57) interacts with substrate. Tyr-58 (proton donor) is an active-site residue. A substrate-binding site is contributed by 73-75 (GAA).

The protein belongs to the PanD family. In terms of assembly, heterooctamer of four alpha and four beta subunits. The cofactor is pyruvate. Is synthesized initially as an inactive proenzyme, which is activated by self-cleavage at a specific serine bond to produce a beta-subunit with a hydroxyl group at its C-terminus and an alpha-subunit with a pyruvoyl group at its N-terminus.

It localises to the cytoplasm. It carries out the reaction L-aspartate + H(+) = beta-alanine + CO2. It participates in cofactor biosynthesis; (R)-pantothenate biosynthesis; beta-alanine from L-aspartate: step 1/1. In terms of biological role, catalyzes the pyruvoyl-dependent decarboxylation of aspartate to produce beta-alanine. The protein is Aspartate 1-decarboxylase of Syntrophobacter fumaroxidans (strain DSM 10017 / MPOB).